Reading from the N-terminus, the 644-residue chain is Sodium/hydrogen exchanger 9 (644 aa).

Residues 1-20 are Lumenal-facing; sequence MAGQLRLTSGKDEDHFQHQG. Residues 21–41 traverse the membrane as a helical segment; sequence AVELLAFNFLLILTILTIWLF. At 42-45 the chain is on the cytoplasmic side; the sequence is KNHR. Residues 46 to 66 form a helical membrane-spanning segment; sequence FRFLHETGGAMVYGLIMGLIL. Topologically, residues 67–126 are lumenal; the sequence is RYATAPTDIDSGTVYNCGKLLFSPSTLLVNITDQVYEYKYQREINQHNISPHQGNAILEK. A helical transmembrane segment spans residues 127 to 147; that stretch reads MTFDPEIFFNVLLPPIIFHAG. At 148 to 164 the chain is on the cytoplasmic side; that stretch reads YSLKKRHFFQNLGSILT. Residues 165–185 form a helical membrane-spanning segment; it reads YAFLGTAISCVVIGLIMYGFV. Topologically, residues 186–203 are lumenal; that stretch reads KAMVHAGQLKSGDFHFTD. The chain crosses the membrane as a helical span at residues 204–224; the sequence is CLFFGSLMSATDPVTVLAIFH. At 225 to 235 the chain is on the cytoplasmic side; it reads ELHVDPDLYTL. The chain crosses the membrane as a helical span at residues 236 to 256; that stretch reads LFGESVLNDAVAIVLTYSISI. Topologically, residues 257–277 are lumenal; the sequence is YSPKENPNAFDTAAFFQSVGN. A helical transmembrane segment spans residues 278-298; sequence FLGIFAGSFAMGSAYAVVTAL. Residues 299-309 are Cytoplasmic-facing; the sequence is LTKFTKLREFP. Residues 310–327 form a helical membrane-spanning segment; sequence MLETGLFFLLSWSAFLSA. The Lumenal segment spans residues 328–333; sequence EAAGLT. The helical transmembrane segment at 334–350 threads the bilayer; the sequence is GIVAVLFCGVTQAHYTY. Residues 351–364 are Cytoplasmic-facing; sequence NNLSSDSKLRTKQL. The helical transmembrane segment at 365-385 threads the bilayer; it reads FEFMNFLAENVIFCYMGLALF. T386 is a topological domain (lumenal). Residues 387-407 traverse the membrane as a helical segment; that stretch reads FQNHIFNALFILGAFLAIFVA. Residues 408-429 are Cytoplasmic-facing; that stretch reads RACNIYPLSFLLNLGRKQKIPW. Residues 430–450 traverse the membrane as a helical segment; it reads NFQHMMMFSGLRGAIAFALAI. Residues 451–465 lie on the Lumenal side of the membrane; the sequence is RNTESQPKQMMFTTT. A helical transmembrane segment spans residues 466–486; sequence LLLVFFTVWVFGGGTTPMLTW. At 487–644 the chain is on the cytoplasmic side; that stretch reads LQIRVGVDLD…EQTRGQPQMD (158 aa).

It belongs to the monovalent cation:proton antiporter 1 (CPA1) transporter (TC 2.A.36) family. In terms of assembly, homodimer; phosphatidylinositol-4,5-bisphosphate (PIP2) and phosphatidylinositol 3,4,5-trisphosphate (PIP3) could be involved in the dimer stabilization. Interacts (via the C-terminus) with RACK1. Interacts with CHP1. In terms of tissue distribution, expressed in hair bundles and in vestibular hair bundles. Expressed in brain.

It localises to the late endosome membrane. The protein localises to the early endosome membrane. Its subcellular location is the recycling endosome membrane. It is found in the cell membrane. The protein resides in the cytoplasmic vesicle. It localises to the phagosome membrane. The catalysed reaction is Na(+)(in) + H(+)(out) = Na(+)(out) + H(+)(in). The enzyme catalyses K(+)(in) + H(+)(out) = K(+)(out) + H(+)(in). Its function is as follows. Endosomal Na(+), K(+)/H(+) antiporter. Mediates the electroneutral exchange of endosomal luminal H(+) for a cytosolic Na(+) or K(+). By facilitating proton efflux, SLC9A9 counteracts the acidity generated by vacuolar (V)-ATPase, thereby limiting luminal acidification. Regulates organellar pH and consequently, endosome maturation and endocytic trafficking of plasma membrane receptors and neurotransporters. Promotes the recycling of transferrin receptors back to the cell surface to facilitate additional iron uptake in the brain. Regulates synaptic transmission by regulating the luminal pH of axonal endosomes. Regulates phagosome lumenal pH, thus affecting phagosome maturation, and consequently, microbicidal activity in macrophages. Can also be active at the cell surface of specialized cells, e.g., in the inner ear hair bundles uses the high K(+) of the endolymph to regulate intracelular pH. In Rattus norvegicus (Rat), this protein is Sodium/hydrogen exchanger 9 (Slc9a9).